We begin with the raw amino-acid sequence, 421 residues long: Solute carrier family 35 member F3 (421 aa).

Residues 25 to 45 (EGEERPRDSPGPAEAQAPAGV) form a disordered region. 10 helical membrane-spanning segments follow: residues 66–86 (IFWGVAVVLCVCSSWAGSTQL), 98–118 (FTLTWFATNWNFLFFPLYYVG), 149–169 (VFFTKAAPFGVLWTLTNYLYL), 179–199 (DVSVLFCCNKAFVFLLSWIVL), 208–228 (IVAAILAIAGIVMMTYADGFH), 232–252 (VIGIALVVASASMSALYKVLF), 266–286 (LFLSILGVFNILFITCIPIIL), 305–325 (LCGFSVLLLTFNIVLNFGIAV), 326–346 (TYPTLMSLGIVLSIPVNAVID), and 352–372 (IVFNGVRVIAIIIIGLGFLLL). Residues 393–421 (KKEEPAEGAADLSSGPQSKNRRARPSFAR) are disordered. Basic residues predominate over residues 411-421 (KNRRARPSFAR).

It belongs to the SLC35F solute transporter family. In terms of tissue distribution, expressed at the highest levels in the adult cerebellum.

The protein localises to the membrane. It catalyses the reaction thiamine(in) = thiamine(out). Functionally, mediates thiamine transport. The protein is Solute carrier family 35 member F3 of Homo sapiens (Human).